Reading from the N-terminus, the 861-residue chain is Translation initiation factor IF-2 (861 aa).

Residues 107 to 272 (AQKQQDIQRA…QRKKKSKVVQ (166 aa)) are disordered. Over residues 115–128 (RAAEEAAAKERETE) the composition is skewed to basic and acidic residues. Polar residues-rich tracts occupy residues 148–158 (SVQQEAANMDT) and 169–180 (VDESVSATTAGG). Positions 210 to 228 (NKEDSEVRREPADAEDLKR) are enriched in basic and acidic residues. Basic residues predominate over residues 260-269 (RARQRKKKSK). The tr-type G domain occupies 362–531 (SRAPVVSVMG…LLQSEMLELT (170 aa)). The segment at 371-378 (GHVDHGKT) is G1. 371–378 (GHVDHGKT) lines the GTP pocket. Residues 396 to 400 (GITQH) are G2. Residues 417–420 (DTPG) are G3. Residues 417-421 (DTPGH) and 471-474 (NKMD) each bind GTP. Residues 471-474 (NKMD) are G4. The interval 507-509 (SAH) is G5.

The protein belongs to the TRAFAC class translation factor GTPase superfamily. Classic translation factor GTPase family. IF-2 subfamily.

Its subcellular location is the cytoplasm. In terms of biological role, one of the essential components for the initiation of protein synthesis. Protects formylmethionyl-tRNA from spontaneous hydrolysis and promotes its binding to the 30S ribosomal subunits. Also involved in the hydrolysis of GTP during the formation of the 70S ribosomal complex. This is Translation initiation factor IF-2 from Hahella chejuensis (strain KCTC 2396).